The primary structure comprises 551 residues: Putative transport protein NTHI0043 (551 aa).

5 helical membrane-spanning segments follow: residues 4–24 (IAITISLLALVAVIGLWIGHW), 28–48 (GVGLGIGGVLFGGIIVAHFTN), 65–85 (FGLILFVYTIGIQVGPGFFSS), 95–115 (AFAILIIVLGSIAVVLVHKIA), and 157–177 (VSYAMAYPFGICGILLAMWLI). 2 RCK C-terminal domains span residues 191–275 (RFNA…IIGY) and 277–360 (VDAP…VIGN). A run of 6 helical transmembrane segments spans residues 370–390 (MLPVFIGIGLGVLVGSIPFYI), 402–424 (AGGPLVVALILARIGTIGKLYWF), 438–458 (IVLFLAVVGLKSGGSFFDTLV), 463–483 (LEWMGYGIFITFIPLMITGIL), 492–512 (YLTICGLLAGSMTDPPALAFA), and 529–549 (VYPLVMFLRIMSPQLLAVLLW).

The protein belongs to the AAE transporter (TC 2.A.81) family. YidE subfamily.

The protein resides in the cell membrane. This is Putative transport protein NTHI0043 from Haemophilus influenzae (strain 86-028NP).